Reading from the N-terminus, the 355-residue chain is MAKLLALTLVGLVLALYKNHRSSYQTRLNAFREVTPVELPNCNLVKGIETGAEDLEILPNGLTFFSTGLKYPGIKSFDPSKPGKILLMDLNKKEPAVSELEIIGNTLDISSFNPHGISTFTDEDNTVYLLVVNHPDSSSTVEVFKFQEEERSLLHLKTITHELLPSINDIAAIGPESFYATNDHYFADPYLRSWEMYLGLSWSNVVYYSPDKVQVVAEGFDFANGIGISLDGKYVYIAELLAHKIHVYEKHANWTLTPLKVLNFDTLVDNISVDPVTGDLWVGCHPNGMRIFFYDAENPPGSEVLRIQNILSEDPKITVVYAENGTVLQGTTVASVYKGKLLIGTVFHKALYCDL.

Cys42 and Cys353 are disulfide-bonded. Glu53 and Asp54 together coordinate Ca(2+). The Proton acceptor role is filled by His115. Ca(2+) contacts are provided by Ile117, Asn168, Asp169, and Asn224. Asn253 carries N-linked (GlcNAc...) asparagine glycosylation. Residues Asp269 and Asn270 each coordinate Ca(2+). Residues Asn270 and Asn324 are each glycosylated (N-linked (GlcNAc...) asparagine).

It belongs to the paraoxonase family. In terms of assembly, homodimer. Interacts with CLU. Ca(2+) serves as cofactor. Post-translationally, the signal sequence is not cleaved. As to expression, plasma, liver, kidney, heart, brain, small intestine and lung. In the plasma, associated with HDL.

The protein resides in the secreted. Its subcellular location is the extracellular space. It carries out the reaction a phenyl acetate + H2O = a phenol + acetate + H(+). It catalyses the reaction An aryl dialkyl phosphate + H2O = dialkyl phosphate + an aryl alcohol.. The enzyme catalyses an N-acyl-L-homoserine lactone + H2O = an N-acyl-L-homoserine + H(+). In terms of biological role, hydrolyzes the toxic metabolites of a variety of organophosphorus insecticides. Capable of hydrolyzing a broad spectrum of organophosphate substrates and lactones, and a number of aromatic carboxylic acid esters. Mediates an enzymatic protection of low density lipoproteins against oxidative modification. The sequence is that of Serum paraoxonase/arylesterase 1 (Pon1) from Mus musculus (Mouse).